A 510-amino-acid chain; its full sequence is Maturase K (510 aa).

This sequence belongs to the intron maturase 2 family. MatK subfamily.

The protein resides in the plastid. It localises to the chloroplast. In terms of biological role, usually encoded in the trnK tRNA gene intron. Probably assists in splicing its own and other chloroplast group II introns. The chain is Maturase K from Populus nigra (Lombardy poplar).